Here is a 52-residue protein sequence, read N- to C-terminus: Metallothionein-2 (52 aa).

2 consecutive repeats follow at residues 43-47 (QTCKC) and 48-52 (QTCKC).

It belongs to the metallothionein superfamily. Type 10 family.

Functionally, the metallothioneins are involved in the cellular sequestration of toxic metal ions. The polypeptide is Metallothionein-2 (MT-II) (Candida glabrata (strain ATCC 2001 / BCRC 20586 / JCM 3761 / NBRC 0622 / NRRL Y-65 / CBS 138) (Yeast)).